The chain runs to 254 residues: Alcohol dehydrogenase (254 aa).

NAD(+) is bound at residue 10–33; the sequence is FVAGLGGIGLETSREIVKSGPKNL. Position 138 (Ser-138) interacts with substrate. Tyr-151 functions as the Proton acceptor in the catalytic mechanism.

It belongs to the short-chain dehydrogenases/reductases (SDR) family. In terms of assembly, homodimer.

The catalysed reaction is a primary alcohol + NAD(+) = an aldehyde + NADH + H(+). The enzyme catalyses a secondary alcohol + NAD(+) = a ketone + NADH + H(+). The protein is Alcohol dehydrogenase (Adh) of Scaptomyza crassifemur (Fruit fly).